Here is a 215-residue protein sequence, read N- to C-terminus: Redox-sensing transcriptional repressor Rex 2 (215 aa).

The segment at residues 15–54 is a DNA-binding region (H-T-H motif); it reads VYLRYLKMLGDSGVKRIKSREFSEMIQIPSATIRRDFSHV. 89-94 is an NAD(+) binding site; sequence GCGNLG.

Belongs to the transcriptional regulatory Rex family. Homodimer.

The protein resides in the cytoplasm. Modulates transcription in response to changes in cellular NADH/NAD(+) redox state. The sequence is that of Redox-sensing transcriptional repressor Rex 2 from Enterococcus faecalis (strain ATCC 700802 / V583).